Reading from the N-terminus, the 164-residue chain is Putative ankyrin repeat protein RBE_0585 (164 aa).

ANK repeat units lie at residues Asn42–Leu107 and Asp126–Tyr149.

The sequence is that of Putative ankyrin repeat protein RBE_0585 from Rickettsia bellii (strain RML369-C).